The following is a 912-amino-acid chain: MSALTQSGSIEKPCTILINYDKGDPPQVNEFKQNFEHGTTEQKIETLKKVILYTINGEPIPQLLMPIILYVMPSNDHTIKKLLLIYWEVIEKTHLGKLKSEMILVCNSLLNDLNHPNEFVRGSTLRFLCKLREAEVLEPLVPSVRSNLENRHAYCRRNAVLAIYNIYSHFDYLIPDAPELIYNFLLQEKDASCKRNAFIMLFNCAPEKAVEYLSSVLDEVPSFGDMLQFIVVELIRKVCKTSPSERSKYIKCIFTLLNSSSPAVKYESAGTLLSLSSAPTAVRGAASAYIDLLCNESDNNVKMIVLDKLIEIKKNHSKIMEELVMDILRALSSPNIDICKKVLNIVLDSVTPKNIDEIILFLKKEINKTQSKEFDKGLEYRHILIRTIHVSSLKYPEVLGNVVPLLMEYLGDSYLPSAVDVVIFLREVVETYPSLRELIIKKLIENLSSIKVSKVYRVAVWVIAEYVTCLEDLQYAMTSITNDLEELLKPKQTEEVILETKAKVKIEKVSIQKLIADGDWYLASCISSSLTKLFFRAEQLNIDNADSNKLKAQVMMIISVLINLSKASQVSTSKSAYERMLSCIQVLIDSNATIKKIWLQDCRDSFANYLKYLLIKQSENKKKTEKEVLVKPNNIINIRQLKSKKAFGPVDTEDDLIKAVGNTGEANKDQNEYSKISQLSGFSDPIYVEAYVRVHQYDIVLDISVFNQTNDTLQNVTLELVTLGDLKICERVPPFTMAPREKTSAKASIKVSSTDNGVIMGTIAFDIAGSVSSMSDKNCVILNELHIDVIDYILPANHQYTDVLFRNHWLEFEWENKIPVNTNITDLVKYVHHISKVTNMGILTPEVHLSNDTGILSANLCAKSVFGEDALANICIEKQADGKISGYIRIRAKVQSIAVTLGEKIGNMGMKA.

10 HEAT repeats span residues 59 to 96, 100 to 135, 136 to 172, 244 to 281, 300 to 337, 339 to 375, 397 to 434, 441 to 479, 550 to 575, and 576 to 612; these read PIPQ…THLG, SEMI…REAE, VLEP…HFDY, SERS…APTA, NVKM…PNID, CKKV…KEFD, EVLG…TYPS, KKLI…AMTS, LKAQ…TSKS, and AYER…YLKY.

Oligomeric complex that consists of at least the alpha, beta, beta', gamma, delta, epsilon and zeta subunits.

Its subcellular location is the cytoplasm. The protein localises to the golgi apparatus membrane. It is found in the cytoplasmic vesicle. It localises to the COPI-coated vesicle membrane. In terms of biological role, the coatomer is a cytosolic protein complex that binds to dilysine motifs and reversibly associates with Golgi non-clathrin-coated vesicles, which further mediate biosynthetic protein transport from the ER, via the Golgi up to the trans Golgi network. Coatomer complex is required for budding from Golgi membranes, and is essential for the retrograde Golgi-to-ER transport of dilysine-tagged proteins. The sequence is that of Coatomer subunit beta (copb) from Dictyostelium discoideum (Social amoeba).